Reading from the N-terminus, the 151-residue chain is UPF0756 membrane protein GK2737 (151 aa).

4 helical membrane-spanning segments follow: residues 5 to 25 (VLFL…SLIV), 53 to 73 (WGVT…EIGF), 79 to 99 (SLQS…ALIA), and 121 to 141 (ILAV…AGIA).

This sequence belongs to the UPF0756 family.

It localises to the cell membrane. The protein is UPF0756 membrane protein GK2737 of Geobacillus kaustophilus (strain HTA426).